Here is a 456-residue protein sequence, read N- to C-terminus: MPPDFWERCFWLWGLLLWLSVGSTGDAPPTPQTNCTDFQNANLLRGTNLKVQFLLFTPLDPSCGQLVEESSDIQNSGFNATLGTKLVIHGFRALGTKPSWIDRFIDALLRAADANVIAVDWVYGSTAAYFSAVENVIKLGLEISRFLRKLLALGVSESSIHIIGISLGAHVGGMVGHFYNGQLGQITGLDPAGPEYTRASLEERLDPGDALFVEAIHTDTDNLGIRIPVGHVDYFINGGQDQPGCPTSIYAGYSYLICDHMRAVHLYISALENSCPLVAFPCTNYKDFLAGQCLDCFNPFLLSCPRIGLVEQGGVKIEPLPKEVKVYLLTTSMAPYCVHHSLVEFHLQEPRNKDTCITVTFLSSSVTSSVKITIPRHQRVGKGVLAHPSPQCQINQVKLKLQASHRVWKKDQTTIIGRFCTAPLPVNDNKKMVCLPEPVNLQASETVSHDLKITCI.

The N-terminal stretch at 1-25 is a signal peptide; the sequence is MPPDFWERCFWLWGLLLWLSVGSTG. An N-linked (GlcNAc...) asparagine glycan is attached at N34. S166 serves as the catalytic Nucleophile. The active-site Charge relay system is D190. Cysteines 245 and 258 form a disulfide. The Charge relay system role is filled by H260. Cystine bridges form between C282–C293 and C296–C304.

The protein belongs to the AB hydrolase superfamily. Lipase family.

It is found in the secreted. The enzyme catalyses a 1,2-diacyl-sn-glycero-3-phospho-L-serine + H2O = a 2-acyl-sn-glycero-3-phospho-L-serine + a fatty acid + H(+). The catalysed reaction is 1,2-di-(9Z)-octadecenoyl-sn-glycero-3-phospho-L-serine + H2O = 2-(9Z-octadecenoyl)-sn-glycero-3-phospho-L-serine + (9Z)-octadecenoate + H(+). It catalyses the reaction 1-hexadecanoyl-2-(5Z,8Z,11Z,14Z-eicosatetraenoyl)-sn-glycero-3-phospho-L-serine + H2O = 2-(5Z,8Z,11Z,14Z)-eicosatetraenoyl-sn-glycero-3-phospho-L-serine + hexadecanoate + H(+). It carries out the reaction a 1-acyl-sn-glycero-3-phospho-L-serine + H2O = sn-glycero-3-phospho-L-serine + a fatty acid + H(+). The enzyme catalyses 1-(9Z-octadecenoyl)-sn-glycero-3-phospho-L-serine + H2O = sn-glycero-3-phospho-L-serine + (9Z)-octadecenoate + H(+). In terms of biological role, hydrolyzes the ester bond of the acyl group attached at the sn-1 position of phosphatidylserines (phospholipase A1 activity) and 1-acyl-2-lysophosphatidylserines (lysophospholipase activity) in the pathway of phosphatidylserines acyl chain remodeling. Cleaves phosphatidylserines exposed on the outer leaflet of the plasma membrane of apoptotic cells producing 2-acyl-1-lysophosphatidylserines, which in turn enhance mast cell activation and histamine production. Has no activity toward other glycerophospholipids including phosphatidylcholines, phosphatidylethanolamines, phosphatidic acids or phosphatidylinositols, or glycerolipids such as triolein. The chain is Phospholipase A1 member A (PLA1A) from Bos taurus (Bovine).